Here is a 301-residue protein sequence, read N- to C-terminus: MSWIIFYTVIAALLILDLRIIHKNNTIMSFKESVLFSLFYLVIACLFGIYVYYNTGADHAREYYTCFLIEKAMSLDNIFVISIIFQFFKIPWQYQHRVLFFGIIGVIIFRAVMIYGGIILINKFAWLLYIFAVILIATGIKTFYVSHKTFDIQNSYIYKSIIKNLNITPNLEGNKFIVKRNNKLYCTPLFISLVLIEAIDLVFAIDSIPAIFAITNDVYIIYTSNIFAILGLRALFFCLAEIVERFSYIKYSLALILIFISFKIFIHHYIAIPEYVAFTVTMTLLLFGIIASIIRKNMIDH.

Transmembrane regions (helical) follow at residues 1-21, 33-53, 72-92, 101-121, 124-144, 194-214, 220-240, 253-273, and 274-294; these read MSWI…LRII, SVLF…YVYY, AMSL…KIPW, FGII…IILI, FAWL…KTFY, VLIE…IFAI, IIYT…FCLA, LALI…IAIP, and EYVA…ASII.

The protein belongs to the TerC family.

The protein resides in the cell membrane. This is an uncharacterized protein from Rickettsia conorii (strain ATCC VR-613 / Malish 7).